We begin with the raw amino-acid sequence, 411 residues long: Zinc metalloproteinase/disintegrin (411 aa).

Residues Met1 to Ser20 form the signal peptide. The propeptide occupies Ile21–Glu190. A Peptidase M12B domain is found at Arg197–Pro395. Residue Asp284 participates in Ca(2+) binding. Disulfide bonds link Cys308-Cys390, Cys352-Cys374, and Cys354-Cys357. Zn(2+) is bound at residue His333. Glu334 is an active-site residue. The Zn(2+) site is built by His337 and His343. Ca(2+) is bound by residues Cys390 and Asn393. Positions Leu396 to Leu411 are excised as a propeptide.

Belongs to the venom metalloproteinase (M12B) family. P-II subfamily. In terms of assembly, monomer. Requires Zn(2+) as cofactor. As to expression, expressed by the venom gland.

It localises to the secreted. Its function is as follows. Snake venom metalloproteinase that impairs hemostasis in the envenomed animal. The chain is Zinc metalloproteinase/disintegrin from Protobothrops mucrosquamatus (Taiwan habu).